Here is a 66-residue protein sequence, read N- to C-terminus: Large ribosomal subunit protein bL35 (66 aa).

Polar residues predominate over residues 18 to 27 (ATGKIKSTQS). Positions 18-41 (ATGKIKSTQSAKRHGMTKRSKRSI) are disordered. Positions 28-41 (AKRHGMTKRSKRSI) are enriched in basic residues.

The protein belongs to the bacterial ribosomal protein bL35 family.

This chain is Large ribosomal subunit protein bL35, found in Ehrlichia ruminantium (strain Gardel).